Consider the following 188-residue polypeptide: Elongation factor P-like protein (188 aa).

The protein belongs to the elongation factor P family.

This Xylella fastidiosa (strain M23) protein is Elongation factor P-like protein.